A 281-amino-acid chain; its full sequence is Orotidine 5'-phosphate decarboxylase (281 aa).

Lys-94 acts as the Proton donor in catalysis.

Belongs to the OMP decarboxylase family. Type 2 subfamily.

It catalyses the reaction orotidine 5'-phosphate + H(+) = UMP + CO2. The protein operates within pyrimidine metabolism; UMP biosynthesis via de novo pathway; UMP from orotate: step 2/2. The protein is Orotidine 5'-phosphate decarboxylase of Thermomicrobium roseum (strain ATCC 27502 / DSM 5159 / P-2).